The following is a 226-amino-acid chain: MSRPGLFISFEGIDGAGKSSHVEGLAAAFRAQGRRVTVSREPGGTPLAEKLRALLLAERMDALTESLLIFAARRDHLRQVIEPALARGDVVLCDRFTDSTFAYQGAGRGFDHETLSILERMTNTAAAHKDGLLPEPELTLWFDLAPELAAERMAGAAHRPDRFEAQPVEFFRRVARGYADRAAAAPRRIVRIDAAQECHRVRQQLRDALVCKGWLAPMVTPQGGAQ.

12-19 (GIDGAGKS) is an ATP binding site.

This sequence belongs to the thymidylate kinase family.

It carries out the reaction dTMP + ATP = dTDP + ADP. In terms of biological role, phosphorylation of dTMP to form dTDP in both de novo and salvage pathways of dTTP synthesis. This Verminephrobacter eiseniae (strain EF01-2) protein is Thymidylate kinase.